A 401-amino-acid chain; its full sequence is S-adenosylmethionine synthase (401 aa).

137–142 (GQGSGD) contributes to the ATP binding site.

Belongs to the AdoMet synthase 2 family. Requires Mg(2+) as cofactor.

It catalyses the reaction L-methionine + ATP + H2O = S-adenosyl-L-methionine + phosphate + diphosphate. Its pathway is amino-acid biosynthesis; S-adenosyl-L-methionine biosynthesis; S-adenosyl-L-methionine from L-methionine: step 1/1. Its function is as follows. Catalyzes the formation of S-adenosylmethionine from methionine and ATP. The polypeptide is S-adenosylmethionine synthase (Haloquadratum walsbyi (strain DSM 16790 / HBSQ001)).